The following is a 520-amino-acid chain: GMP synthase [glutamine-hydrolyzing] (520 aa).

Residues 9 to 202 enclose the Glutamine amidotransferase type-1 domain; the sequence is TVLIVDFGSQ…IHNIAGIKGD (194 aa). Catalysis depends on cysteine 86, which acts as the Nucleophile. Active-site residues include histidine 176 and glutamate 178. Residues 203–395 form the GMPS ATP-PPase domain; it reads WSMSAYRAKA…LGLPDSFIGR (193 aa). 230-236 lines the ATP pocket; sequence SGGVDSS.

In terms of assembly, homodimer.

The catalysed reaction is XMP + L-glutamine + ATP + H2O = GMP + L-glutamate + AMP + diphosphate + 2 H(+). The protein operates within purine metabolism; GMP biosynthesis; GMP from XMP (L-Gln route): step 1/1. Its function is as follows. Catalyzes the synthesis of GMP from XMP. This is GMP synthase [glutamine-hydrolyzing] from Rhizobium rhizogenes (strain K84 / ATCC BAA-868) (Agrobacterium radiobacter).